Reading from the N-terminus, the 77-residue chain is Putative defensin-like protein 187 (77 aa).

The signal sequence occupies residues 1–19; sequence MKNSSIMFVLIVVFLISSS. 3 disulfides stabilise this stretch: Cys31–Cys77, Cys43–Cys71, and Cys47–Cys73.

The protein belongs to the DEFL family.

The protein resides in the secreted. The chain is Putative defensin-like protein 187 (LCR42) from Arabidopsis thaliana (Mouse-ear cress).